A 206-amino-acid polypeptide reads, in one-letter code: Macrophage immunometabolism regulator (206 aa).

The protein belongs to the UNC119-binding protein family. As to quaternary structure, interacts with unc119 family proteins; interaction preferentially takes place when unc119 proteins are unliganded with myristoylated proteins.

It is found in the cytoplasm. Its subcellular location is the cell projection. The protein localises to the cilium. Its function is as follows. May play a role in immune regulation through regulation of the macrophage function. Involved in the recruitment of macrophages in response to injury. May also play a role in trafficking of proteins via its interaction with unc119 family cargo adapters. May play a role in ciliary membrane localization. Functionally, regulates the macrophage function, by enhancing the resolution of inflammation and wound repair functions mediated by M2 macrophages. The regulation of macrophage function is, due at least in part, to the role of C5orf30 in regulating ability to inhibit glycolysis. Probably plays alaso a role in trafficking of proteins via its interaction with UNC119 and UNC119B cargo adapters: may help the release of UNC119 and UNC119B cargo or the recycling of UNC119 and UNC119B. May play a role in ciliary membrane localization via its interaction with UNC119B and protein transport into photoreceptor cells. This is Macrophage immunometabolism regulator (macir) from Danio rerio (Zebrafish).